The sequence spans 612 residues: Kelch repeat and BTB domain-containing protein 3 (612 aa).

Residues 52–119 (YDFKIIMKDE…AYTGKTKITD (68 aa)) form the BTB domain. One can recognise a BACK domain in the interval 154-254 (CLQLLSISDS…QLSEETLQDC (101 aa)). 5 Kelch repeats span residues 295–341 (KYIF…SSYG), 343–403 (KIFL…MALD), 404–454 (RLFV…TCQN), 456–506 (IYVL…KAVP), and 552–599 (KIYI…VIQF).

The chain is Kelch repeat and BTB domain-containing protein 3 from Homo sapiens (Human).